A 275-amino-acid chain; its full sequence is Small ribosomal subunit protein uS3 (275 aa).

Positions 38 to 106 (IRRMMTSGME…QVQLNILEVK (69 aa)) constitute a KH type-2 domain. The span at 216–228 (NAAARAGNRPARG) shows a compositional bias: low complexity. The segment at 216–275 (NAAARAGNRPARGGADRPARGGRGGERGGRGRKPQQAPAAEAPKAEAPAAAPAESTGTEA) is disordered. The span at 229-244 (GADRPARGGRGGERGG) shows a compositional bias: basic and acidic residues. Positions 249 to 268 (PQQAPAAEAPKAEAPAAAPA) are enriched in low complexity.

This sequence belongs to the universal ribosomal protein uS3 family. Part of the 30S ribosomal subunit. Forms a tight complex with proteins S10 and S14.

In terms of biological role, binds the lower part of the 30S subunit head. Binds mRNA in the 70S ribosome, positioning it for translation. The chain is Small ribosomal subunit protein uS3 from Streptomyces avermitilis (strain ATCC 31267 / DSM 46492 / JCM 5070 / NBRC 14893 / NCIMB 12804 / NRRL 8165 / MA-4680).